The chain runs to 520 residues: GMP synthase [glutamine-hydrolyzing] (520 aa).

Residues 12-205 form the Glutamine amidotransferase type-1 domain; the sequence is KIIVLDYGSQ…AIFICGARGD (194 aa). Catalysis depends on cysteine 89, which acts as the Nucleophile. Active-site residues include histidine 179 and glutamate 181. In terms of domain architecture, GMPS ATP-PPase spans 206–395; the sequence is WSMDNFIDMQ…LGMPENIVWR (190 aa). An ATP-binding site is contributed by 233-239; sequence SGGVDSS.

In terms of assembly, homodimer.

The catalysed reaction is XMP + L-glutamine + ATP + H2O = GMP + L-glutamate + AMP + diphosphate + 2 H(+). Its pathway is purine metabolism; GMP biosynthesis; GMP from XMP (L-Gln route): step 1/1. In terms of biological role, catalyzes the synthesis of GMP from XMP. This chain is GMP synthase [glutamine-hydrolyzing], found in Streptococcus uberis (strain ATCC BAA-854 / 0140J).